We begin with the raw amino-acid sequence, 78 residues long: Small ribosomal subunit protein bS18 (78 aa).

This sequence belongs to the bacterial ribosomal protein bS18 family. As to quaternary structure, part of the 30S ribosomal subunit. Forms a tight heterodimer with protein bS6.

Binds as a heterodimer with protein bS6 to the central domain of the 16S rRNA, where it helps stabilize the platform of the 30S subunit. In Geobacillus sp. (strain WCH70), this protein is Small ribosomal subunit protein bS18.